The chain runs to 76 residues: Large ribosomal subunit protein uL29 (76 aa).

The protein belongs to the universal ribosomal protein uL29 family.

The sequence is that of Large ribosomal subunit protein uL29 from Corynebacterium diphtheriae (strain ATCC 700971 / NCTC 13129 / Biotype gravis).